Reading from the N-terminus, the 533-residue chain is Glucose-6-phosphate isomerase (533 aa).

Glu-341 (proton donor) is an active-site residue. Residues His-372 and Lys-501 contribute to the active site.

Belongs to the GPI family.

The protein resides in the cytoplasm. The enzyme catalyses alpha-D-glucose 6-phosphate = beta-D-fructose 6-phosphate. It functions in the pathway carbohydrate biosynthesis; gluconeogenesis. Its pathway is carbohydrate degradation; glycolysis; D-glyceraldehyde 3-phosphate and glycerone phosphate from D-glucose: step 2/4. Its function is as follows. Catalyzes the reversible isomerization of glucose-6-phosphate to fructose-6-phosphate. The chain is Glucose-6-phosphate isomerase from Cereibacter sphaeroides (strain ATCC 17025 / ATH 2.4.3) (Rhodobacter sphaeroides).